The sequence spans 146 residues: Large ribosomal subunit protein bL21 (146 aa).

The interval 103 to 146 (DGKSPTIGPRPKKEKAVEPVEGASDDKPRRAAKKTAAKTAEDAD) is disordered. Positions 116-131 (EKAVEPVEGASDDKPR) are enriched in basic and acidic residues.

This sequence belongs to the bacterial ribosomal protein bL21 family. As to quaternary structure, part of the 50S ribosomal subunit. Contacts protein L20.

Its function is as follows. This protein binds to 23S rRNA in the presence of protein L20. This Nitrobacter winogradskyi (strain ATCC 25391 / DSM 10237 / CIP 104748 / NCIMB 11846 / Nb-255) protein is Large ribosomal subunit protein bL21.